Reading from the N-terminus, the 533-residue chain is Quinate permease (533 aa).

At 1–21 (MSILALVEDRPTPREVYNWRV) the chain is on the cytoplasmic side. A helical membrane pass occupies residues 22 to 42 (YLLAAVASFTSCMIGYDSAFI). At 43-67 (GTTLSLQSFQNEFNWESLNTDLISA) the chain is on the extracellular side. The helical transmembrane segment at 68-88 (NIVSLYQAGAFFGALFAYPIG) threads the bilayer. The Cytoplasmic segment spans residues 89 to 94 (HFWGRR). A helical transmembrane segment spans residues 95-115 (WGLMFSALIFFLGAGMMLGAN). At 116–127 (GDRGLGLIYGGR) the chain is on the extracellular side. A helical membrane pass occupies residues 128-148 (VLAGIGVGAGSNICPIYISEM). Residues 149–156 (APPAIRGR) are Cytoplasmic-facing. A helical membrane pass occupies residues 157–177 (LVGVYELGWQIGGVVGFWINY). Residues 178-191 (GVDETLAPSHKQWI) lie on the Extracellular side of the membrane. A helical membrane pass occupies residues 192–212 (IPFAVQLIPAGLLIIGALLIR). The Cytoplasmic segment spans residues 213-282 (ESPRWLFLRG…AWTNKRILYR (70 aa)). A helical transmembrane segment spans residues 283–303 (LFLGSMLFLWQNGSGINAINY). The Extracellular segment spans residues 304 to 324 (YSPRVFKSIGVSGGNTSLLTT). The helical transmembrane segment at 325–346 (GIFGVVKAVITFVWLLYLIDHF) threads the bilayer. Residues 347 to 349 (GRR) lie on the Cytoplasmic side of the membrane. The helical transmembrane segment at 350–370 (NLLLVGAAGGSVCLWIVGGYI) threads the bilayer. The Extracellular segment spans residues 371–385 (KIAKPENNPEGTQLD). Residues 386–406 (SGGIAAIFFFYLWTAFYTPSW) form a helical membrane-spanning segment. The Cytoplasmic segment spans residues 407 to 431 (NGTPWVINSEMFDPTVRSLAQACAA). Residues 432–452 (ASNWLWNFLISRFTPQMFTSM) form a helical membrane-spanning segment. Over 453 to 454 (GY) the chain is Extracellular. A helical membrane pass occupies residues 455–475 (GVYFFFASLMILSIVFVFFLI). Topologically, residues 476–533 (PETKGVPLESMETLFDKKPVWHAHSQLIRELRENEEAFRADMGASGKGGVTKEYVEEA) are cytoplasmic.

The protein belongs to the major facilitator superfamily. Sugar transporter (TC 2.A.1.1) family. As to quaternary structure, interacts with creB. Ubiquitinated. Deubiquitinated by creB, probably to control its activity or amount.

It is found in the cell membrane. Its function is as follows. Integral membrane transporter that imports quinic acid to be catabolized as a carbon source. This is Quinate permease (qutD) from Emericella nidulans (strain FGSC A4 / ATCC 38163 / CBS 112.46 / NRRL 194 / M139) (Aspergillus nidulans).